Here is a 141-residue protein sequence, read N- to C-terminus: Hemoglobin subunit alpha-D (141 aa).

The 141-residue stretch at 1 to 141 folds into the Globin domain; it reads MLTADDKKLI…VAAVLAEKYR (141 aa). Residues H58 and H87 each contribute to the heme b site.

It belongs to the globin family. In terms of assembly, heterotetramer of two alpha-D chains and two beta chains. Red blood cells.

In terms of biological role, involved in oxygen transport from the lung to the various peripheral tissues. This chain is Hemoglobin subunit alpha-D (HBAD), found in Struthio camelus (Common ostrich).